Consider the following 597-residue polypeptide: Aspartate--tRNA(Asp/Asn) ligase (597 aa).

Residue Glu-182 participates in L-aspartate binding. Positions 206-209 (QLFK) are aspartate. Arg-228 lines the L-aspartate pocket. ATP is bound by residues 228 to 230 (RDE) and Gln-237. Residue His-455 participates in L-aspartate binding. Residue Glu-489 participates in ATP binding. Arg-496 contributes to the L-aspartate binding site. Residue 541-544 (GFDR) participates in ATP binding.

It belongs to the class-II aminoacyl-tRNA synthetase family. Type 1 subfamily. Homodimer.

It localises to the cytoplasm. The enzyme catalyses tRNA(Asx) + L-aspartate + ATP = L-aspartyl-tRNA(Asx) + AMP + diphosphate. In terms of biological role, aspartyl-tRNA synthetase with relaxed tRNA specificity since it is able to aspartylate not only its cognate tRNA(Asp) but also tRNA(Asn). Reaction proceeds in two steps: L-aspartate is first activated by ATP to form Asp-AMP and then transferred to the acceptor end of tRNA(Asp/Asn). The polypeptide is Aspartate--tRNA(Asp/Asn) ligase (Desulfosudis oleivorans (strain DSM 6200 / JCM 39069 / Hxd3) (Desulfococcus oleovorans)).